We begin with the raw amino-acid sequence, 658 residues long: PTS system 2-O-alpha-mannosyl-D-glycerate-specific EIIABC component (658 aa).

Over 1-313 the chain is Periplasmic; it reads MVLFYRAHWR…TELKQALLSG (313 aa). Positions 25–171 constitute a PTS EIIA type-2 domain; sequence TLTHRDALCL…DELLSALDDK (147 aa). H87 functions as the Tele-phosphohistidine intermediate; for EIIA activity in the catalytic mechanism. H87 is modified (phosphohistidine; by HPr). Residues 186-282 form the PTS EIIB type-2 domain; the sequence is IVCVTACPAG…AEALIQQALT (97 aa). C192 acts as the Phosphocysteine intermediate; for EIIB activity in catalysis. Residue C192 is modified to Phosphocysteine; by EIIA. Residues 306-641 form the PTS EIIC type-2 domain; sequence LKQALLSGIS…AISTAILLMW (336 aa). A helical membrane pass occupies residues 314 to 334; the sequence is ISFAVPLIVAGGTVLAVAVLL. Residues 335-358 lie on the Cytoplasmic side of the membrane; that stretch reads SQIFGLQDLFNEENSWLWMYRKLG. Residues 359–379 traverse the membrane as a helical segment; sequence GGLLGILMVPVLAAYTAYSLA. At 380–389 the chain is on the periplasmic side; that stretch reads DKPALAPGFA. A helical transmembrane segment spans residues 390–410; it reads AGLAANMIGSGFLGAVVGGLI. At 411–433 the chain is on the cytoplasmic side; that stretch reads AGYLMRWVKNHLRLSSKFNGFLT. The helical transmembrane segment at 434-454 threads the bilayer; the sequence is FYLYPVLGTLGAGSLMLFVVG. Residues 455–474 lie on the Periplasmic side of the membrane; the sequence is EPVAWINNSLTAWLNGLSGS. A helical transmembrane segment spans residues 475–495; it reads NALLLGAILGFMCSFDLGGPV. The Cytoplasmic segment spans residues 496 to 500; the sequence is NKAAY. A helical transmembrane segment spans residues 501-521; that stretch reads AFCLGAMANGVYGPYAIFASV. Residues 522–551 lie on the Periplasmic side of the membrane; that stretch reads KMVSAFTVTASTMLAPRLFKEFEIETGKST. Residues 552–572 traverse the membrane as a helical segment; that stretch reads WLLGLAGITEGAIPMAIEDPL. Position 573 (R573) is a topological domain, cytoplasmic. A helical transmembrane segment spans residues 574-594; sequence VIGSFVLGSMVTGAIVGAMNI. Over 595-620 the chain is Periplasmic; the sequence is GLSTPGAGIFSLFLLHDNGAGGVMAA. A helical transmembrane segment spans residues 621–641; that stretch reads IGWFGAALVGAAISTAILLMW. Over 642 to 658 the chain is Cytoplasmic; the sequence is RRHAVKHGNYLTDGVMP.

The protein resides in the cell inner membrane. It catalyses the reaction (2R)-2-O-(alpha-D-mannosyl)-glycerate(out) + N(pros)-phospho-L-histidyl-[protein] = (2R)-2-O-(6-phospho-alpha-D-mannosyl)-glycerate(in) + L-histidyl-[protein]. In terms of biological role, the phosphoenolpyruvate-dependent sugar phosphotransferase system (sugar PTS), a major carbohydrate active transport system, catalyzes the phosphorylation of incoming sugar substrates concomitantly with their translocation across the cell membrane. This system is involved in mannosyl-D-glycerate transport. Also involved in thermoinduction of ompC. In Escherichia coli (strain K12), this protein is PTS system 2-O-alpha-mannosyl-D-glycerate-specific EIIABC component.